The chain runs to 487 residues: NADH-quinone oxidoreductase subunit N (487 aa).

The next 14 membrane-spanning stretches (helical) occupy residues 8–28 (LIAM…MLSI), 35–55 (FINA…LYFV), 78–98 (GLVI…LVGY), 104–124 (EFYL…SANH), 125–145 (LASL…LIGY), 159–179 (YMLL…LLYA), 203–223 (ILAG…LVPF), 235–255 (PAPV…AVVM), 271–291 (LVLS…AISQ), 297–317 (LLGY…VAVQ), 328–348 (IGVY…VVSL), 376–396 (AVMT…GFIG), 409–428 (LWWL…YYYL), and 451–471 (ALTA…VLGI).

Belongs to the complex I subunit 2 family. NDH-1 is composed of 13 different subunits. Subunits NuoA, H, J, K, L, M, N constitute the membrane sector of the complex.

The protein resides in the cell inner membrane. The catalysed reaction is a quinone + NADH + 5 H(+)(in) = a quinol + NAD(+) + 4 H(+)(out). In terms of biological role, NDH-1 shuttles electrons from NADH, via FMN and iron-sulfur (Fe-S) centers, to quinones in the respiratory chain. The immediate electron acceptor for the enzyme in this species is believed to be ubiquinone. Couples the redox reaction to proton translocation (for every two electrons transferred, four hydrogen ions are translocated across the cytoplasmic membrane), and thus conserves the redox energy in a proton gradient. The protein is NADH-quinone oxidoreductase subunit N of Yersinia pestis bv. Antiqua (strain Angola).